Consider the following 337-residue polypeptide: Phosphate acyltransferase (337 aa).

Belongs to the PlsX family. As to quaternary structure, homodimer. Probably interacts with PlsY.

It is found in the cytoplasm. It catalyses the reaction a fatty acyl-[ACP] + phosphate = an acyl phosphate + holo-[ACP]. Its pathway is lipid metabolism; phospholipid metabolism. In terms of biological role, catalyzes the reversible formation of acyl-phosphate (acyl-PO(4)) from acyl-[acyl-carrier-protein] (acyl-ACP). This enzyme utilizes acyl-ACP as fatty acyl donor, but not acyl-CoA. The sequence is that of Phosphate acyltransferase from Polynucleobacter asymbioticus (strain DSM 18221 / CIP 109841 / QLW-P1DMWA-1) (Polynucleobacter necessarius subsp. asymbioticus).